The primary structure comprises 351 residues: Methylthioribose-1-phosphate isomerase (351 aa).

Substrate-binding positions include 55-57 (RGA), Arg95, and Gln202. The active-site Proton donor is the Asp243. 253-254 (NK) is a substrate binding site.

It belongs to the eIF-2B alpha/beta/delta subunits family. MtnA subfamily.

The catalysed reaction is 5-(methylsulfanyl)-alpha-D-ribose 1-phosphate = 5-(methylsulfanyl)-D-ribulose 1-phosphate. Its pathway is amino-acid biosynthesis; L-methionine biosynthesis via salvage pathway; L-methionine from S-methyl-5-thio-alpha-D-ribose 1-phosphate: step 1/6. Catalyzes the interconversion of methylthioribose-1-phosphate (MTR-1-P) into methylthioribulose-1-phosphate (MTRu-1-P). The sequence is that of Methylthioribose-1-phosphate isomerase from Marinobacter nauticus (strain ATCC 700491 / DSM 11845 / VT8) (Marinobacter aquaeolei).